The chain runs to 274 residues: Putative hydro-lyase SAV_6940 (274 aa).

Belongs to the D-glutamate cyclase family.

In Streptomyces avermitilis (strain ATCC 31267 / DSM 46492 / JCM 5070 / NBRC 14893 / NCIMB 12804 / NRRL 8165 / MA-4680), this protein is Putative hydro-lyase SAV_6940.